Consider the following 239-residue polypeptide: 1-(5-phosphoribosyl)-5-[(5-phosphoribosylamino)methylideneamino] imidazole-4-carboxamide isomerase (239 aa).

Aspartate 8 acts as the Proton acceptor in catalysis. Residue aspartate 130 is the Proton donor of the active site.

It belongs to the HisA/HisF family.

The protein localises to the cytoplasm. It catalyses the reaction 1-(5-phospho-beta-D-ribosyl)-5-[(5-phospho-beta-D-ribosylamino)methylideneamino]imidazole-4-carboxamide = 5-[(5-phospho-1-deoxy-D-ribulos-1-ylimino)methylamino]-1-(5-phospho-beta-D-ribosyl)imidazole-4-carboxamide. The protein operates within amino-acid biosynthesis; L-histidine biosynthesis; L-histidine from 5-phospho-alpha-D-ribose 1-diphosphate: step 4/9. In Streptococcus thermophilus (strain ATCC BAA-491 / LMD-9), this protein is 1-(5-phosphoribosyl)-5-[(5-phosphoribosylamino)methylideneamino] imidazole-4-carboxamide isomerase.